The primary structure comprises 530 residues: MSENIKPSEVSEVLLQQLKGIDTHLQFDEVGNVLQVSDGVARIYGLRNAEANELLEFENGIMAIVMNLEEDNVGAVLLGPTDQIKEGMVVKRTKRIASINVGEGMLGRVIDPLGVPLDGRGQIGGELCEMPLERKAPGVIFRQPVNQPLQTGLKSVDAMIPIGRGQRELIIGDRQTGKTSIAIDTILNQKSNYEAGKPVYCIYVAIGQKGSTVASLVNTLRERGAMDYTIVVAATAADPAALQYFAPFAGAAIGEYFRDTGRDALVVYDDLSKQAVAYREVSLILRRPSGREAYPGDIFYLHSRLLERAAKIINQQEVAEQMNDLPPSLKGKVKAGGSLTALPIIETQAGDVSAYIPTNVISITDGQIFLETDLFNQGFRPAINVGISVSRVGGSAQIKSMKKVAGTLKIDQAQYRELEAFSKFSSDMDPVTAMAIDRGRKNNQLLIQPQYSPMPVGEQIAILYCGTHSLLRDVPLHKVQDFQKSFLEMMRADHQKDVLDVLSSGVINDDVTAIIEKVAADTAQPFKVNE.

G172 to T179 serves as a coordination point for ATP.

This sequence belongs to the ATPase alpha/beta chains family. F-type ATPases have 2 components, CF(1) - the catalytic core - and CF(0) - the membrane proton channel. CF(1) has five subunits: alpha(3), beta(3), gamma(1), delta(1), epsilon(1). CF(0) has three main subunits: a(1), b(2) and c(9-12). The alpha and beta chains form an alternating ring which encloses part of the gamma chain. CF(1) is attached to CF(0) by a central stalk formed by the gamma and epsilon chains, while a peripheral stalk is formed by the delta and b chains.

It localises to the cell inner membrane. It catalyses the reaction ATP + H2O + 4 H(+)(in) = ADP + phosphate + 5 H(+)(out). Functionally, produces ATP from ADP in the presence of a proton gradient across the membrane. The alpha chain is a regulatory subunit. This chain is ATP synthase subunit alpha, found in Phocaeicola vulgatus (strain ATCC 8482 / DSM 1447 / JCM 5826 / CCUG 4940 / NBRC 14291 / NCTC 11154) (Bacteroides vulgatus).